Consider the following 474-residue polypeptide: Bifunctional protein HldE (474 aa).

A ribokinase region spans residues 1–318 (MKLSMPRFDQ…RAIQREEGSE (318 aa)). Position 194–197 (194–197 (NLSE)) interacts with ATP. Aspartate 263 is an active-site residue. Residues 343-474 (FTNGCFDILH…AIVEKIRGQG (132 aa)) are cytidylyltransferase.

The protein in the N-terminal section; belongs to the carbohydrate kinase PfkB family. It in the C-terminal section; belongs to the cytidylyltransferase family. Homodimer.

It catalyses the reaction D-glycero-beta-D-manno-heptose 7-phosphate + ATP = D-glycero-beta-D-manno-heptose 1,7-bisphosphate + ADP + H(+). The enzyme catalyses D-glycero-beta-D-manno-heptose 1-phosphate + ATP + H(+) = ADP-D-glycero-beta-D-manno-heptose + diphosphate. It functions in the pathway nucleotide-sugar biosynthesis; ADP-L-glycero-beta-D-manno-heptose biosynthesis; ADP-L-glycero-beta-D-manno-heptose from D-glycero-beta-D-manno-heptose 7-phosphate: step 1/4. It participates in nucleotide-sugar biosynthesis; ADP-L-glycero-beta-D-manno-heptose biosynthesis; ADP-L-glycero-beta-D-manno-heptose from D-glycero-beta-D-manno-heptose 7-phosphate: step 3/4. Catalyzes the phosphorylation of D-glycero-D-manno-heptose 7-phosphate at the C-1 position to selectively form D-glycero-beta-D-manno-heptose-1,7-bisphosphate. In terms of biological role, catalyzes the ADP transfer from ATP to D-glycero-beta-D-manno-heptose 1-phosphate, yielding ADP-D-glycero-beta-D-manno-heptose. This is Bifunctional protein HldE from Pseudomonas syringae pv. syringae (strain B728a).